A 346-amino-acid polypeptide reads, in one-letter code: Dehydrogenase orf1 (346 aa).

43–48 (VDYATQ) serves as a coordination point for NADP(+). 133–140 (LAFSTAIV) contributes to the substrate binding site. Residues 170-173 (ATSV), 193-196 (SPHN), Tyr-211, and 251-252 (LN) each bind NADP(+). 269–273 (APPNV) lines the substrate pocket. 336–337 (VS) serves as a coordination point for NADP(+).

The protein belongs to the zinc-containing alcohol dehydrogenase family.

It functions in the pathway secondary metabolite biosynthesis. Functionally, dehydrogenase; part of the gene cluster that mediates the biosynthesis of nigerpyrone and its derivatives carbonarone A and pestalamide A. The biosynthesis pathway begins with the polyketide assembly by epaA to form phenylacetyl triketide precursor from successive condensation of two malonyl-CoA, presumably with one phenylacetyl-CoA starter unit produced by the phenylacetyl-CoA ligase epaB. For the nigerpyrone biosynthesis, the reactive polyketide chain is released as an aldehyde through the R-domain. A nonenzymatic cyclization and dehydration may create nigerpyrone. For the biosynthesis of carbonarone A and pestalamide A, an extra methyl group is added through the C-methyltransferase domain. Several further steps involving the dehydrogenase orf1, the cytochrome P450 monooxygenase orf2 and the FAD-dependent monooxygenase orf3 are required to form a carbonarone A precursor which is converted to carbonarone A via cyclization. The O-acetyltransferase epaC could catalyze the transfer of 2-methylsuccinyl-CoA, a common intermediate in the ethylmalonyl-CoA pathway, to generate the final product pestalamide A. This chain is Dehydrogenase orf1, found in Aspergillus niger (strain ATCC MYA-4892 / CBS 513.88 / FGSC A1513).